The primary structure comprises 188 residues: Elongation factor P (188 aa).

The protein belongs to the elongation factor P family.

It localises to the cytoplasm. The protein operates within protein biosynthesis; polypeptide chain elongation. In terms of biological role, involved in peptide bond synthesis. Stimulates efficient translation and peptide-bond synthesis on native or reconstituted 70S ribosomes in vitro. Probably functions indirectly by altering the affinity of the ribosome for aminoacyl-tRNA, thus increasing their reactivity as acceptors for peptidyl transferase. In Bacteroides thetaiotaomicron (strain ATCC 29148 / DSM 2079 / JCM 5827 / CCUG 10774 / NCTC 10582 / VPI-5482 / E50), this protein is Elongation factor P.